The chain runs to 407 residues: Protein FAM53B (407 aa).

2 disordered regions span residues 204-286 and 306-380; these read SSSM…RPSL and ITGE…DTEP. Composition is skewed to basic and acidic residues over residues 264–281 and 327–339; these read LNEK…DTHK and DAVD…HNLK. The Nuclear localization signal motif lies at 272–275; it reads KRRR. Over residues 357–369 the composition is skewed to acidic residues; sequence ITEEVDWNCDDGT.

Belongs to the FAM53 family. As to quaternary structure, interacts with ctnnb1. In terms of tissue distribution, predominantly expressed in proliferating cells throughout embryonic development.

Its subcellular location is the nucleus. In terms of biological role, acts as a regulator of Wnt signaling pathway by regulating beta-catenin (ctnnb1) nuclear localization. This is Protein FAM53B from Oryzias latipes (Japanese rice fish).